We begin with the raw amino-acid sequence, 1545 residues long: ATP-binding cassette sub-family C member 2 (1545 aa).

The Extracellular segment spans residues 1–27; that stretch reads MLEKFCNSTFWNSSFLDSPEADLPLCF. N-linked (GlcNAc...) asparagine glycosylation is found at Asn7 and Asn12. The helical transmembrane segment at 28–48 threads the bilayer; that stretch reads EQTVLVWIPLGYLWLLAPWQL. Over 49–68 the chain is Cytoplasmic; it reads LHVYKSRTKRSSTTKLYLAK. A helical membrane pass occupies residues 69 to 89; the sequence is QVFVGFLLILAAIELALVLTE. Over 90–93 the chain is Extracellular; that stretch reads DSGQ. The helical transmembrane segment at 94–114 threads the bilayer; the sequence is ATVPAVRYTNPSLYLGTWLLV. Residues 115–126 lie on the Cytoplasmic side of the membrane; the sequence is LLIQYSRQWCVQ. The chain crosses the membrane as a helical span at residues 127–147; that stretch reads KNSWFLSLFWILSILCGTFQF. Residues 148 to 165 lie on the Extracellular side of the membrane; that stretch reads QTLIRTLLQGDNSNLAYS. A helical membrane pass occupies residues 166-186; it reads CLFFISYGFQILILIFSAFSE. The Cytoplasmic portion of the chain corresponds to 187 to 313; that stretch reads NNESSNNPSS…DVPKSWLMKA (127 aa). Positions 253–284 are disordered; that stretch reads ARRALQRRQEKSSQQNSGARLPGLNKNQSQSQ. Phosphoserine occurs at positions 281 and 283. A helical transmembrane segment spans residues 314 to 334; sequence LFKTFYMVLLKSFLLKLVNDI. Residues 322–605 enclose the ABC transmembrane type-1 1 domain; sequence LLKSFLLKLV…LPMMISSMLQ (284 aa). Residues 335–360 are Extracellular-facing; the sequence is FTFVSPQLLKLLISFASDRDTYLWIG. Residues 361–381 form a helical membrane-spanning segment; it reads YLCAILLFTAALIQSFCLQCY. Residues 382 to 437 are Cytoplasmic-facing; that stretch reads FQLCFKLGVKVRTAIMASVYKKALTLSNLARKEYTVGETVNLMSVDAQKLMDVTNF. The helical transmembrane segment at 438 to 458 threads the bilayer; sequence MHMLWSSVLQIVLSIFFLWRE. Over 459–461 the chain is Extracellular; it reads LGP. The helical transmembrane segment at 462–482 threads the bilayer; that stretch reads SVLAGVGVMVLVIPINAILST. At 483-544 the chain is on the cytoplasmic side; sequence KSKTIQVKNM…NLLAFSQLQC (62 aa). A helical transmembrane segment spans residues 545–565; the sequence is VVIFVFQLTPVLVSVVTFSVY. The Extracellular portion of the chain corresponds to 566–587; it reads VLVDSNNILDAQKAFTSITLFN. A helical membrane pass occupies residues 588-608; that stretch reads ILRFPLSMLPMMISSMLQASV. The Cytoplasmic portion of the chain corresponds to 609 to 971; sequence STERLEKYLG…VKFSIYLEYL (363 aa). The ABC transporter 1 domain occupies 637 to 861; sequence MQFSEASFTW…KGEFAKNLKT (225 aa). 671-678 provides a ligand contact to ATP; it reads GPVGSGKS. Ser878, Ser926, Ser930, and Ser938 each carry phosphoserine. Residues 972–992 traverse the membrane as a helical segment; sequence QAIGLFSIFFIILAFVMNSVA. One can recognise an ABC transmembrane type-1 2 domain in the interval 979–1264; sequence IFFIILAFVM…LVRMTSEIET (286 aa). Over 993–1033 the chain is Extracellular; it reads FIGSNLWLSAWTSDSKIFNSTDYPASQRDMRVGVYGALGLA. N-linked (GlcNAc...) asparagine glycosylation occurs at Asn1011. The helical transmembrane segment at 1034–1054 threads the bilayer; it reads QGIFVFIAHFWSAFGFVHASN. Residues 1055 to 1097 lie on the Cytoplasmic side of the membrane; that stretch reads ILHKQLLNNILRAPMRFFDTTPTGRIVNRFAGDISTVDDTLPQ. Residues 1098–1118 traverse the membrane as a helical segment; sequence SLRSWITCFLGIISTLVMICM. Ala1119 is a topological domain (extracellular). The chain crosses the membrane as a helical span at residues 1120 to 1140; the sequence is TPVFTIIVIPLGIIYVSVQMF. The Cytoplasmic portion of the chain corresponds to 1141 to 1211; that stretch reads YVSTSRQLRR…TSNRWLAIRL (71 aa). Residues 1212–1232 traverse the membrane as a helical segment; sequence ELVGNLTVFFSALMMVIYRDT. The Extracellular portion of the chain corresponds to 1233–1234; sequence LS. A helical transmembrane segment spans residues 1235–1255; sequence GDTVGFVLSNALNITQTLNWL. At 1256 to 1545 the chain is on the cytoplasmic side; sequence VRMTSEIETN…GIENVNSTKF (290 aa). The ABC transporter 2 domain maps to 1300–1534; it reads IQFNNYQVRY…PGPFYFMAKE (235 aa). 1334–1341 contributes to the ATP binding site; the sequence is GRTGAGKS. Ser1438 carries the phosphoserine modification.

Belongs to the ABC transporter superfamily. ABCC family. Conjugate transporter (TC 3.A.1.208) subfamily. In terms of tissue distribution, expressed by polarized cells in liver, kidney and intestine. The highest expression is found in liver. Expressed in small intestine.

The protein resides in the apical cell membrane. It catalyses the reaction ATP + H2O + xenobioticSide 1 = ADP + phosphate + xenobioticSide 2.. The enzyme catalyses an S-substituted glutathione(in) + ATP + H2O = an S-substituted glutathione(out) + ADP + phosphate + H(+). The catalysed reaction is taurolithocholate 3-sulfate(in) + ATP + H2O = taurolithocholate 3-sulfate(out) + ADP + phosphate + H(+). It carries out the reaction leukotriene C4(in) + ATP + H2O = leukotriene C4(out) + ADP + phosphate + H(+). It catalyses the reaction 17beta-estradiol 17-O-(beta-D-glucuronate)(in) + ATP + H2O = 17beta-estradiol 17-O-(beta-D-glucuronate)(out) + ADP + phosphate + H(+). The enzyme catalyses (4Z,15Z)-bilirubin IXalpha C8-beta-D-glucuronoside(in) + ATP + H2O = (4Z,15Z)-bilirubin IXalpha C8-beta-D-glucuronoside(out) + ADP + phosphate + H(+). The catalysed reaction is (4Z,15Z)-bilirubin IXalpha C8,C12-beta-D-bisglucuronoside(in) + ATP + H2O = (4Z,15Z)-bilirubin IXalpha C8,C12-beta-D-bisglucuronoside(out) + ADP + phosphate + H(+). Its function is as follows. ATP-dependent transporter of the ATP-binding cassette (ABC) family that binds and hydrolyzes ATP to enable active transport of various substrates including many drugs, toxicants and endogenous compound across cell membranes. Transports a wide variety of conjugated organic anions such as sulfate-, glucuronide- and glutathione (GSH)-conjugates of endo- and xenobiotics substrates. Mediates hepatobiliary excretion of mono- and bis-glucuronidated bilirubin molecules and therefore play an important role in bilirubin detoxification. Also mediates hepatobiliary excretion of others glucuronide conjugates such as 17beta-estradiol 17-glucosiduronic acid and leukotriene C4. Transports sulfated bile salt such as taurolithocholate sulfate. Transports various anticancer drugs, such as anthracycline, vinca alkaloid and methotrexate and HIV-drugs such as protease inhibitors. Confers resistance to several anti-cancer drugs including cisplatin, doxorubicin, epirubicin, methotrexate, etoposide and vincristine. This is ATP-binding cassette sub-family C member 2 from Homo sapiens (Human).